Consider the following 304-residue polypeptide: Energy-coupling factor transporter ATP-binding protein EcfA2 (304 aa).

Residues 3-261 form the ABC transporter domain; the sequence is IIVKNISYIY…EKFLVENKLK (259 aa). 40-47 is a binding site for ATP; it reads GSTGSGKT.

This sequence belongs to the ABC transporter superfamily. Energy-coupling factor EcfA family. Forms a stable energy-coupling factor (ECF) transporter complex composed of 2 membrane-embedded substrate-binding proteins (S component), 2 ATP-binding proteins (A component) and 2 transmembrane proteins (T component).

It localises to the cell membrane. ATP-binding (A) component of a common energy-coupling factor (ECF) ABC-transporter complex. Unlike classic ABC transporters this ECF transporter provides the energy necessary to transport a number of different substrates. This Mycoplasmopsis pulmonis (strain UAB CTIP) (Mycoplasma pulmonis) protein is Energy-coupling factor transporter ATP-binding protein EcfA2.